The chain runs to 246 residues: NAD-dependent protein deacylase (246 aa).

Positions 1 to 246 (MDLSQARAAL…RGLELLLEDD (246 aa)) constitute a Deacetylase sirtuin-type domain. 21–41 (GAGISAESGIPTFRDAQTGHW) contacts NAD(+). 2 residues coordinate substrate: Tyr-66 and Arg-69. Residue 101–104 (QNVD) coordinates NAD(+). His-123 (proton acceptor) is an active-site residue. NAD(+)-binding positions include 191 to 193 (GTS), 217 to 219 (NPE), and Ala-235.

It belongs to the sirtuin family. Class III subfamily.

The protein localises to the cytoplasm. It catalyses the reaction N(6)-acetyl-L-lysyl-[protein] + NAD(+) + H2O = 2''-O-acetyl-ADP-D-ribose + nicotinamide + L-lysyl-[protein]. It carries out the reaction N(6)-succinyl-L-lysyl-[protein] + NAD(+) + H2O = 2''-O-succinyl-ADP-D-ribose + nicotinamide + L-lysyl-[protein]. Its function is as follows. NAD-dependent lysine deacetylase and desuccinylase that specifically removes acetyl and succinyl groups on target proteins. Modulates the activities of several proteins which are inactive in their acylated form. This Deinococcus radiodurans (strain ATCC 13939 / DSM 20539 / JCM 16871 / CCUG 27074 / LMG 4051 / NBRC 15346 / NCIMB 9279 / VKM B-1422 / R1) protein is NAD-dependent protein deacylase.